We begin with the raw amino-acid sequence, 247 residues long: Cell division protein ZapD (247 aa).

Belongs to the ZapD family. As to quaternary structure, interacts with FtsZ.

The protein resides in the cytoplasm. Functionally, cell division factor that enhances FtsZ-ring assembly. Directly interacts with FtsZ and promotes bundling of FtsZ protofilaments, with a reduction in FtsZ GTPase activity. This is Cell division protein ZapD from Escherichia fergusonii (strain ATCC 35469 / DSM 13698 / CCUG 18766 / IAM 14443 / JCM 21226 / LMG 7866 / NBRC 102419 / NCTC 12128 / CDC 0568-73).